Reading from the N-terminus, the 247-residue chain is UDP-N-acetyl-D-mannosaminuronic acid transferase (247 aa).

Belongs to the glycosyltransferase 26 family.

The enzyme catalyses UDP-N-acetyl-alpha-D-mannosaminouronate + N-acetyl-alpha-D-glucosaminyl-di-trans,octa-cis-undecaprenyl diphosphate = beta-D-ManNAcA-(1-&gt;4)-alpha-D-GlcNAc-di-trans,octa-cis-undecaprenyl diphosphate + UDP + H(+). Its pathway is bacterial outer membrane biogenesis; enterobacterial common antigen biosynthesis. Its function is as follows. Catalyzes the synthesis of Und-PP-GlcNAc-ManNAcA (Lipid II), the second lipid-linked intermediate involved in enterobacterial common antigen (ECA) synthesis. This is UDP-N-acetyl-D-mannosaminuronic acid transferase from Enterobacter sp. (strain 638).